Reading from the N-terminus, the 78-residue chain is Protein SlyX homolog (78 aa).

It belongs to the SlyX family.

In Xanthomonas axonopodis pv. citri (strain 306), this protein is Protein SlyX homolog.